We begin with the raw amino-acid sequence, 375 residues long: MENFPTEYFLNTSVRLLEYIRYRDSNYTREERIENLHYAYNKAAHHFAQPRQQQLLKVDPKRLQASLQTIVGMVVYSWAKVSKECMADLSIHYTYTLVLDDSSDDPYPAMLNYFGDLQAGREQAHPWWALVNEHFPNVLRHFGPFCSLNLIRSTMDFFEGCWIEQYNFGGFPGSDDYPQFLRRMNGLGHCVGASLWPKDLFDERKHFLEITSAVAQMENWMVWVNDLMSFYKEFDDERDQISLVKNFVTCHEITLDEALEKLTQETLHSSKQMVAVFSNKDPQVMDTIECFMHGYVTWHLCDARYRLHEIYEKVKDQDTEDAKKFCKFFEQAANVGAVAPSEWAYPPVAQLANVRAKGDVKEAQKPFLSSIELVE.

Belongs to the trichodiene synthase family.

The enzyme catalyses (2E,6E)-farnesyl diphosphate = trichodiene + diphosphate. Its pathway is sesquiterpene biosynthesis; trichothecene biosynthesis. TS is a member of the terpene cyclase group of enzymes. It catalyzes the isomerization and cyclization of farnesyl pyro-phosphate to form trichodiene, the first cyclic intermediate in the biosynthetic pathway for trichothecenes. It serves to branch trichothecene biosynthesis from the isoprenoid pathway. The chain is Trichodiene synthase (TRI5) from Fusarium pseudograminearum (Wheat and barley crown-rot fungus).